We begin with the raw amino-acid sequence, 37 residues long: Large ribosomal subunit protein bL36 (37 aa).

Belongs to the bacterial ribosomal protein bL36 family.

The protein is Large ribosomal subunit protein bL36 of Leptothrix cholodnii (strain ATCC 51168 / LMG 8142 / SP-6) (Leptothrix discophora (strain SP-6)).